A 169-amino-acid polypeptide reads, in one-letter code: Putative pre-16S rRNA nuclease (169 aa).

Positions 1-19 are enriched in basic and acidic residues; it reads MTDSDHRLPDRPGEGDPGR. Residues 1 to 24 form a disordered region; the sequence is MTDSDHRLPDRPGEGDPGRGRRIG.

It belongs to the YqgF nuclease family.

The protein resides in the cytoplasm. In terms of biological role, could be a nuclease involved in processing of the 5'-end of pre-16S rRNA. This Mycobacterium sp. (strain KMS) protein is Putative pre-16S rRNA nuclease.